The primary structure comprises 262 residues: Plant intracellular Ras-group-related LRR protein 7 (262 aa).

LRR repeat units follow at residues 19-42 (WRST…VLQV), 43-66 (GNSL…VGTL), 68-89 (NMQR…IGYL), 90-112 (RNLK…LGSL), 113-135 (SNLQ…VGDL), 137-158 (NMLL…IGGC), 159-181 (SSLE…ICNL), 182-204 (VCLK…LLKD), and 206-231 (KALQ…GFTE).

Belongs to the SHOC2 family. As to expression, widely expressed and preferentially in leaf sheathes.

Leucine-rich repeat protein that likely mediates protein interactions, possibly in the context of signal transduction. The sequence is that of Plant intracellular Ras-group-related LRR protein 7 (IRL7) from Oryza sativa subsp. japonica (Rice).